The primary structure comprises 443 residues: Probable lipase C16A3.12c (443 aa).

The Cytoplasmic segment spans residues 1-16; it reads MSGFNKNQIYWGDYVG. A helical; Signal-anchor for type II membrane protein transmembrane segment spans residues 17 to 37; it reads VIAAFVGVYTELVARIFIYMI. The Lumenal segment spans residues 38 to 443; sequence PERVREWFRV…KHFVKQNGFH (406 aa). In terms of domain architecture, AB hydrolase-1 spans 116–410; the sequence is VVYCHHGLMT…HYEHLDFLWG (295 aa). Residues Asn134 and Asn177 are each glycosylated (N-linked (GlcNAc...) asparagine). Ser210 serves as the catalytic Nucleophile. Asn304 and Asn335 each carry an N-linked (GlcNAc...) asparagine glycan. Catalysis depends on charge relay system residues Asp378 and His404.

The protein belongs to the AB hydrolase superfamily. Lipase family.

The protein localises to the cytoplasm. The protein resides in the vacuole. It is found in the membrane. Its function is as follows. Probable lipase. This Schizosaccharomyces pombe (strain 972 / ATCC 24843) (Fission yeast) protein is Probable lipase C16A3.12c.